A 144-amino-acid chain; its full sequence is MIKFFLMVNKQGQTRLSKYYEHVDINKRALLETEVSKSCLSRSSEQCSFIEYKDFKLIYRQYAALFVVVGVNDTENEMAIYEFIHNFVEVLDGYFSRVSELDIMFNLDKVHIILDEMVLNGCIVETNRARILAPLLILDKLSES.

The protein belongs to the adaptor complexes small subunit family. As to quaternary structure, adaptor protein complex 4 (AP-4) is a heterotetramer composed of two large adaptins (epsilon-type subunit AP4E1 and beta-type subunit AP4B1), a medium adaptin (mu-type subunit AP4M1) and a small adaptin (sigma-type AP4S1).

The protein localises to the golgi apparatus. Its subcellular location is the trans-Golgi network membrane. Functionally, component of the adaptor protein complex 4 (AP-4). Adaptor protein complexes are vesicle coat components involved both in vesicle formation and cargo selection. They control the vesicular transport of proteins in different trafficking pathways. AP-4 forms a non clathrin-associated coat on vesicles departing the trans-Golgi network (TGN) and may be involved in the targeting of proteins from the trans-Golgi network (TGN) to the endosomal-lysosomal system. It is also involved in protein sorting to the basolateral membrane in epithelial cells and the proper asymmetric localization of somatodendritic proteins in neurons. AP-4 is involved in the recognition and binding of tyrosine-based sorting signals found in the cytoplasmic part of cargos, but may also recognize other types of sorting signal. This Mus musculus (Mouse) protein is AP-4 complex subunit sigma-1.